The following is a 381-amino-acid chain: Subtilisin NAT (381 aa).

Positions 1 to 29 are cleaved as a signal peptide; it reads MRSKKLWISLLFALTLIFTMAFSNMSAQA. A propeptide spanning residues 30–106 is cleaved from the precursor; that stretch reads AGKSSTEKKY…VEEDHIAHEY (77 aa). Residues 38–103 form the Inhibitor I9 domain; the sequence is KYIVGFKQTM…VAYVEEDHIA (66 aa). Positions 111-380 constitute a Peptidase S8 domain; that stretch reads PYGISQIKAP…KGLINVQAAA (270 aa). The active-site Charge relay system is the D138. D147 contacts Ca(2+). H170 acts as the Charge relay system in catalysis. 8 residues coordinate Ca(2+): L181, N183, I185, V187, A275, Y277, T280, and D303. S327 functions as the Charge relay system in the catalytic mechanism.

Belongs to the peptidase S8 family. As to quaternary structure, monomer. Ca(2+) serves as cofactor.

It is found in the secreted. The enzyme catalyses Hydrolysis of proteins with broad specificity for peptide bonds, and a preference for a large uncharged residue in P1. Hydrolyzes peptide amides.. Inhibited by PMSF (phenylmethylsulfonyl fluoride). Functionally, subtilisin is an extracellular alkaline serine protease, it catalyzes the hydrolysis of proteins and peptide amides. Subtilisin NAT also has fibrinolytic activity. This Bacillus subtilis subsp. natto protein is Subtilisin NAT.